We begin with the raw amino-acid sequence, 122 residues long: Lycotoxin-Pa4a (122 aa).

A signal peptide spans 1–20 (MKLGIFFSVFFLAMIHSCLS). Positions 21 to 47 (ETNEDKNLESYFREDDLKALSFGEYAR) are excised as a propeptide. Intrachain disulfides connect cysteine 58–cysteine 73, cysteine 65–cysteine 82, cysteine 72–cysteine 100, and cysteine 84–cysteine 98.

It belongs to the neurotoxin 19 (CSTX) family. As to expression, expressed by the venom gland.

It localises to the secreted. The protein localises to the target cell membrane. Its function is as follows. Potent antibacterial peptide with anti-inflammatory properties. Inhibits both Gram-negative and Gram-positive bacteria by disrupting both the outer membrane and the cytosolic membrane of bacteria. Also downregulates the expression of pro-inflammatory mediators (cyclooxygenase-2 (PTGS2/COX2), nitric oxide-induced synthase (NOS2), IL-1 beta (IL1B), TNF-alpha (TNF)) and upregulates the level of anti-inflammatory cytokine (IL10) by inactivating mitogen-activated protein kinase signaling in a lipopolysaccharide-stimulated murine macrophage cell line. This is Lycotoxin-Pa4a from Pardosa astrigera (Wolf spider).